We begin with the raw amino-acid sequence, 677 residues long: Methionine--tRNA ligase (677 aa).

A 'HIGH' region motif is present at residues 15–25; the sequence is PYANGSIHLGH. Zn(2+) contacts are provided by Cys146, Cys149, Cys159, and Cys162. The 'KMSKS' region motif lies at 333–337; sequence KMSKS. Lys336 contributes to the ATP binding site. Residues 575-677 form the tRNA-binding domain; it reads DFAKIDLRVA…DGAKPGQQVK (103 aa).

Belongs to the class-I aminoacyl-tRNA synthetase family. MetG type 1 subfamily. Homodimer. It depends on Zn(2+) as a cofactor.

Its subcellular location is the cytoplasm. The enzyme catalyses tRNA(Met) + L-methionine + ATP = L-methionyl-tRNA(Met) + AMP + diphosphate. In terms of biological role, is required not only for elongation of protein synthesis but also for the initiation of all mRNA translation through initiator tRNA(fMet) aminoacylation. This is Methionine--tRNA ligase from Salmonella paratyphi C (strain RKS4594).